The chain runs to 104 residues: uncharacterized protein (104 aa).

This is an uncharacterized protein from Methanocaldococcus jannaschii (strain ATCC 43067 / DSM 2661 / JAL-1 / JCM 10045 / NBRC 100440) (Methanococcus jannaschii).